A 225-amino-acid chain; its full sequence is 3-dehydroquinate dehydratase (225 aa).

Residues E30–R32 and R62 each bind 3-dehydroquinate. The Proton donor/acceptor role is filled by H118. Catalysis depends on K143, which acts as the Schiff-base intermediate with substrate. R186, S205, and Q209 together coordinate 3-dehydroquinate.

Belongs to the type-I 3-dehydroquinase family. Homodimer.

The enzyme catalyses 3-dehydroquinate = 3-dehydroshikimate + H2O. Its pathway is metabolic intermediate biosynthesis; chorismate biosynthesis; chorismate from D-erythrose 4-phosphate and phosphoenolpyruvate: step 3/7. In terms of biological role, involved in the third step of the chorismate pathway, which leads to the biosynthesis of aromatic amino acids. Catalyzes the cis-dehydration of 3-dehydroquinate (DHQ) and introduces the first double bond of the aromatic ring to yield 3-dehydroshikimate. The polypeptide is 3-dehydroquinate dehydratase (Streptococcus thermophilus (strain ATCC BAA-250 / LMG 18311)).